The chain runs to 225 residues: MAFYPLQIAGLVLGFLGMVGTLATTLLPQWRVSAFIGSNIIVFERIWEGLWMNCVRQAKARLQCKFYSSMLALSPALEAARALMCVAVALSLIALIIGICGMKKIQCTGSNERAKAYLLGTSGVLFILTGIFVLIPVCWTANIIIRDFYNPAVHVGQKRELGAALFLGWASVAVLFIAGGLLCGFCCCNRKKQRDGYPAPRPSMPRTDERRRNMTRQSETPTSYV.

Residues 1–7 (MAFYPLQ) are Cytoplasmic-facing. A helical membrane pass occupies residues 8-28 (IAGLVLGFLGMVGTLATTLLP). Over 29–81 (QWRVSAFIGSNIIVFERIWEGLWMNCVRQAKARLQCKFYSSMLALSPALEAAR) the chain is Extracellular. A helical transmembrane segment spans residues 82 to 102 (ALMCVAVALSLIALIIGICGM). Residues 103-124 (KKIQCTGSNERAKAYLLGTSGV) lie on the Cytoplasmic side of the membrane. A helical transmembrane segment spans residues 125–145 (LFILTGIFVLIPVCWTANIII). Residues 146–164 (RDFYNPAVHVGQKRELGAA) lie on the Extracellular side of the membrane. A helical transmembrane segment spans residues 165 to 185 (LFLGWASVAVLFIAGGLLCGF). Residues 186–225 (CCCNRKKQRDGYPAPRPSMPRTDERRRNMTRQSETPTSYV) are Cytoplasmic-facing. A disordered region spans residues 194–225 (RDGYPAPRPSMPRTDERRRNMTRQSETPTSYV). Positions 215–225 (TRQSETPTSYV) are enriched in polar residues.

This sequence belongs to the claudin family. As to quaternary structure, does not form homotypic polymeric strands and it is not sufficient to form tight junctions by its own. Interacts with OCLN.

The protein resides in the cell junction. The protein localises to the tight junction. It localises to the cell membrane. The catalysed reaction is chloride(in) = chloride(out). The enzyme catalyses hydrogencarbonate(in) = hydrogencarbonate(out). It carries out the reaction bromide(in) = bromide(out). It catalyses the reaction iodide(out) = iodide(in). The catalysed reaction is fluoride(in) = fluoride(out). The enzyme catalyses nitrate(in) = nitrate(out). It carries out the reaction thiocyanate(in) = thiocyanate(out). In terms of biological role, channel-forming tight junction protein with selectivity for anions, including chloride and hydrogencarbonate, and for solutes smaller than 9 Angstrom in diameter. In the kidney proximal tubule, may be involved in quantitative reabsorption of filtered anions. Does not affect water permeability. The polypeptide is Claudin-17 (CLDN17) (Sus scrofa (Pig)).